Here is a 255-residue protein sequence, read N- to C-terminus: Large ribosomal subunit protein uL4 (255 aa).

It belongs to the universal ribosomal protein uL4 family. As to quaternary structure, part of the 50S ribosomal subunit.

One of the primary rRNA binding proteins, this protein initially binds near the 5'-end of the 23S rRNA. It is important during the early stages of 50S assembly. It makes multiple contacts with different domains of the 23S rRNA in the assembled 50S subunit and ribosome. Functionally, forms part of the polypeptide exit tunnel. This chain is Large ribosomal subunit protein uL4, found in Pyrococcus horikoshii (strain ATCC 700860 / DSM 12428 / JCM 9974 / NBRC 100139 / OT-3).